A 788-amino-acid chain; its full sequence is Pyridoxal-dependent decarboxylase domain-containing protein 1 (788 aa).

Basic and acidic residues predominate over residues glutamate 28 to lysine 40. The tract at residues glutamate 28 to leucine 51 is disordered. A Phosphothreonine modification is found at threonine 414. Phosphoserine is present on serine 652. The disordered stretch occupies residues alanine 684–arginine 788. Phosphothreonine occurs at positions 687 and 691. Phosphoserine is present on residues serine 710, serine 718, and serine 722. The span at histidine 725–arginine 734 shows a compositional bias: basic and acidic residues. Polar residues predominate over residues glycine 738–glutamate 750. 4 positions are modified to phosphoserine: serine 748, serine 757, serine 779, and serine 786. A compositionally biased stretch (basic and acidic residues) spans proline 772–arginine 788.

It belongs to the group II decarboxylase family. The cofactor is pyridoxal 5'-phosphate.

The protein is Pyridoxal-dependent decarboxylase domain-containing protein 1 (PDXDC1) of Homo sapiens (Human).